A 201-amino-acid polypeptide reads, in one-letter code: Putative lipoprotein LppC (201 aa).

Positions 1–23 (MTSTLHRTPLATAGLALVVALGG) are cleaved as a signal peptide. Cys-24 carries the N-palmitoyl cysteine lipid modification. Cys-24 carries the S-diacylglycerol cysteine lipid modification. Prevents bacterial uptake by a human macrophage-like cell line stretches follow at residues 77–96 (GANV…AELA), 97–116 (LVVD…IVTG), and 117–136 (IAPG…GHSV). A disordered region spans residues 122 to 141 (GSTADGQTPAGGHSVPNSGG).

It belongs to the UPF0098 family.

The protein localises to the cell membrane. It localises to the cell surface. Functionally, probably involved in bacterial recognition and uptake by its host (human). This is Putative lipoprotein LppC from Mycobacterium tuberculosis (strain ATCC 25618 / H37Rv).